A 1437-amino-acid polypeptide reads, in one-letter code: DNA polymerase III PolC-type (1437 aa).

Residues 420–576 enclose the Exonuclease domain; sequence YVIFDVETTG…YDSETTGHLC (157 aa).

It belongs to the DNA polymerase type-C family. PolC subfamily.

It is found in the cytoplasm. It catalyses the reaction DNA(n) + a 2'-deoxyribonucleoside 5'-triphosphate = DNA(n+1) + diphosphate. Required for replicative DNA synthesis. This DNA polymerase also exhibits 3' to 5' exonuclease activity. The polypeptide is DNA polymerase III PolC-type (Pediococcus pentosaceus (strain ATCC 25745 / CCUG 21536 / LMG 10740 / 183-1w)).